The primary structure comprises 726 residues: Cyclic nucleotide-gated ion channel 2 (726 aa).

Topologically, residues 1-127 (MPSHPNFIFR…SKRVQRWNRA (127 aa)) are cytoplasmic. The tract at residues 26–46 (IDENSNLQINGGDSSSSGSDE) is disordered. Low complexity predominate over residues 36–45 (GGDSSSSGSD). Residues 128–148 (LLLARGMALAVDPLFFYALSI) traverse the membrane as a helical segment. The Extracellular portion of the chain corresponds to 149-162 (GRTTGPACLYMDGA). Residues 163-183 (FAAVVTVLRTCLDAVHLWHVW) traverse the membrane as a helical segment. Residues 184–219 (LQFRLAYVSRESLVVGCGKLVWDPRAIASHYARSLT) are Cytoplasmic-facing. A helical transmembrane segment spans residues 220-240 (GFWFDVIVILPVPQAVFWLVV). The Extracellular segment spans residues 241–254 (PKLIREEKVKLIMT). Residues 255–275 (ILLLIFLFQFLPKIYHCICLM) traverse the membrane as a helical segment. Over 276–282 (RRMQKVT) the chain is Cytoplasmic. The chain crosses the membrane as a helical span at residues 283-303 (GYIFGTIWWGFALNLIAYFIA). Over 304 to 424 (SHVAGGCWYV…ANDLEPTSNW (121 aa)) the chain is Extracellular. The chain crosses the membrane as a helical span at residues 425–445 (LEVIFSIVMVLSGLLLFTLLI). Over 446 to 726 (GNIQVFLHAV…MSIRPHDHLE (281 aa)) the chain is Cytoplasmic. A nucleoside 3',5'-cyclic phosphate is bound by residues 531–661 (LFRG…ARYY) and Asp600. The tract at residues 645–661 (FRYKFANERLKRTARYY) is calmodulin-binding. Residues 666 to 695 (RTWAAVNIQMAWRRRRKRTRGENIGGSMSP) form the IQ domain.

The protein belongs to the cyclic nucleotide-gated cation channel (TC 1.A.1.5) family. Homotetramer or heterotetramer (Potential). Binds calmodulin-1/4 with a higher affinity than calmodulin-2/3/5. As to expression, expressed in the whole plant but only weakly in roots. Strongly expressed in the expanded cotyledons of 14-day-old seedlings and detected later in leaves after the transition to flowering. Also detected in flowers during organ senescence and in the dehiscence zone of siliques.

Its subcellular location is the cell membrane. In terms of biological role, acts as a cyclic nucleotide-gated ion channel. Permeable to potassium and calcium in a cyclic nucleotide-dependent fashion (cAMP or cGMP). Could also transport lithium, cesium and rubium and displays a strong selectivity against sodium. Seems to directly participate in pathogen-induced calcium influx. May function in homeostasis, re-establishing ionic balance after defense action and/or other stimuli. Could mediate the initiation of the developmentally regulated cell death programs. This chain is Cyclic nucleotide-gated ion channel 2 (CNGC2), found in Arabidopsis thaliana (Mouse-ear cress).